The primary structure comprises 361 residues: MKKKVLVAMSGGVDSSVAAAILKEEGYEVYGATMQIWQNECGEELITGKSCCSIYAVDDARKVANILDIPYYVFNMKDDFRKIVIDYFIDEYIKGRTPNPCIMCNRKIKFELFLKKAIAIGMDYIATGHYAIIEYDSSLNRYLLKRSKAKEKDQTYVLYNMTQEMLSKTLFPLGRFSKDEVRKLAEKFKLPVAKKPDSQEICFIPDNNYGKFIEKETGIREDGVYVDTEGNILGKSKAYYNYTIGQRKGLGISTGKRMYVVAIKPEENKVVLGEEGKIFADALIATDLNFIPFDKLESEIEVTAKIRYTAKEAKAKIVPMENNKVLVKFYEKQRAITPGQSVVFYNNDIVVGGGIIEKALV.

Residues 8-15 and Met-34 each bind ATP; that span reads AMSGGVDS. Cys-104 serves as the catalytic Nucleophile. The cysteines at positions 104 and 202 are disulfide-linked. Gly-128 is an ATP binding site. Residues 152-154 are interaction with tRNA; the sequence is KDQ. Cys-202 serves as the catalytic Cysteine persulfide intermediate. The interval 307–308 is interaction with tRNA; the sequence is RY.

This sequence belongs to the MnmA/TRMU family.

It localises to the cytoplasm. The catalysed reaction is S-sulfanyl-L-cysteinyl-[protein] + uridine(34) in tRNA + AH2 + ATP = 2-thiouridine(34) in tRNA + L-cysteinyl-[protein] + A + AMP + diphosphate + H(+). Catalyzes the 2-thiolation of uridine at the wobble position (U34) of tRNA, leading to the formation of s(2)U34. The sequence is that of tRNA-specific 2-thiouridylase MnmA from Caldicellulosiruptor saccharolyticus (strain ATCC 43494 / DSM 8903 / Tp8T 6331).